A 75-amino-acid chain; its full sequence is Cytochrome c oxidase subunit 6C (75 aa).

At 1-13 the chain is on the mitochondrial matrix side; the sequence is MASEVLVKPQMRG. Residues 14–54 traverse the membrane as a helical segment; the sequence is LLARRLRIHMVGAFLVSLGVAALYKFGVAEPRKKAYADFYK. The Mitochondrial intermembrane portion of the chain corresponds to 55–75; it reads NYSAEKDFEEMKKAGLFRSIK.

This sequence belongs to the cytochrome c oxidase subunit 6c family. In terms of assembly, component of the cytochrome c oxidase (complex IV, CIV), a multisubunit enzyme composed of 14 subunits. The complex is composed of a catalytic core of 3 subunits MT-CO1, MT-CO2 and MT-CO3, encoded in the mitochondrial DNA, and 11 supernumerary subunits COX4I, COX5A, COX5B, COX6A, COX6B, COX6C, COX7A, COX7B, COX7C, COX8 and NDUFA4, which are encoded in the nuclear genome. The complex exists as a monomer or a dimer and forms supercomplexes (SCs) in the inner mitochondrial membrane with NADH-ubiquinone oxidoreductase (complex I, CI) and ubiquinol-cytochrome c oxidoreductase (cytochrome b-c1 complex, complex III, CIII), resulting in different assemblies (supercomplex SCI(1)III(2)IV(1) and megacomplex MCI(2)III(2)IV(2)).

It localises to the mitochondrion inner membrane. It functions in the pathway energy metabolism; oxidative phosphorylation. In terms of biological role, component of the cytochrome c oxidase, the last enzyme in the mitochondrial electron transport chain which drives oxidative phosphorylation. The respiratory chain contains 3 multisubunit complexes succinate dehydrogenase (complex II, CII), ubiquinol-cytochrome c oxidoreductase (cytochrome b-c1 complex, complex III, CIII) and cytochrome c oxidase (complex IV, CIV), that cooperate to transfer electrons derived from NADH and succinate to molecular oxygen, creating an electrochemical gradient over the inner membrane that drives transmembrane transport and the ATP synthase. Cytochrome c oxidase is the component of the respiratory chain that catalyzes the reduction of oxygen to water. Electrons originating from reduced cytochrome c in the intermembrane space (IMS) are transferred via the dinuclear copper A center (CU(A)) of subunit 2 and heme A of subunit 1 to the active site in subunit 1, a binuclear center (BNC) formed by heme A3 and copper B (CU(B)). The BNC reduces molecular oxygen to 2 water molecules using 4 electrons from cytochrome c in the IMS and 4 protons from the mitochondrial matrix. This chain is Cytochrome c oxidase subunit 6C (COX6C), found in Plecturocebus donacophilus (Bolivian gray titi monkey).